The primary structure comprises 398 residues: Phosphoglycerate kinase (398 aa).

Substrate contacts are provided by residues Asp23–Asn25, Arg38, His61–Lys64, Arg122, and Arg155. Residues Lys206, Gly297, Glu328, and Gly354 to Ser357 each bind ATP.

The protein belongs to the phosphoglycerate kinase family. In terms of assembly, monomer.

The protein localises to the cytoplasm. It carries out the reaction (2R)-3-phosphoglycerate + ATP = (2R)-3-phospho-glyceroyl phosphate + ADP. Its pathway is carbohydrate degradation; glycolysis; pyruvate from D-glyceraldehyde 3-phosphate: step 2/5. The sequence is that of Phosphoglycerate kinase from Clostridium botulinum (strain Langeland / NCTC 10281 / Type F).